Reading from the N-terminus, the 257-residue chain is Phosphonates import ATP-binding protein PhnC (257 aa).

The 245-residue stretch at 4–248 folds into the ABC transporter domain; the sequence is IEFKDVNKVY…VFNDIYGRKL (245 aa). ATP is bound at residue 37-44; the sequence is GLSGAGKS.

It belongs to the ABC transporter superfamily. Phosphonates importer (TC 3.A.1.9.1) family. The complex is composed of two ATP-binding proteins (PhnC), two transmembrane proteins (PhnE) and a solute-binding protein (PhnD).

The protein resides in the cell membrane. The catalysed reaction is phosphonate(out) + ATP + H2O = phosphonate(in) + ADP + phosphate + H(+). Functionally, part of the ABC transporter complex PhnCDE involved in phosphonates import. Responsible for energy coupling to the transport system. In Staphylococcus haemolyticus (strain JCSC1435), this protein is Phosphonates import ATP-binding protein PhnC.